A 231-amino-acid polypeptide reads, in one-letter code: Ribosomal RNA small subunit methyltransferase G (231 aa).

S-adenosyl-L-methionine is bound by residues Gly85, Phe90, and Arg154.

This sequence belongs to the methyltransferase superfamily. RNA methyltransferase RsmG family.

Its subcellular location is the cytoplasm. The catalysed reaction is guanosine(527) in 16S rRNA + S-adenosyl-L-methionine = N(7)-methylguanosine(527) in 16S rRNA + S-adenosyl-L-homocysteine. In terms of biological role, specifically methylates the N7 position of guanine in position 527 of 16S rRNA. This is Ribosomal RNA small subunit methyltransferase G from Rhodopseudomonas palustris (strain BisA53).